Reading from the N-terminus, the 847-residue chain is MDGRAEMEVVRTTKGNAAGEVSVHVVTTESTVQSTHLPTTAFIFPSQANATTINLPTSTLEIQRFPREPPRNTGAERPEKGVGSEPITATVIPQISGVQTCNTVRVLEWKDGVATLPGSNLRFRINEYGTLKVVSADKMPPAEAVKEGHAKKDGDSDVAPTSRDNTIVAQDVPEQSKLPTADSICHCDTCGRRHVSDGAREGRGFCSEHCHQQFKERSVIVENSASSTSATEILKPVKKRKRKDYQSPSEEDYESEQMEEKQEEMKNSVGDSAISNPEAHAWSQHSTEGPGASEEKKEGWSWASYLEEQKAVAAPLDLFQDYQVASQHKNGFKVGMKLEGIDPQHPSMYFILTVAEVCGYRMRLHFDGYSECHDFWLNADSPDIHPAGWFEETGHKLQPPKGYKEEEFSWTNYLKITKAQAAPKHLFVIRNTHEAPPGFEVGMKLEAVDRMNPSLICVATVTDVVDDRFLVHFDNWDDTYDYWCDPSSPYIHPVGWCQEHGKPLTPPQDYPDPDNFIWEKYLKETGASAVPAWAFKVRPPHGFLVNMKLEAVDRRTPSFIRVASVEDVEDHRIKIHFDGWSHVYDFWIDADHPDIHPIGWCSKTGHPLQPPLRPKEPASSAHSGCPTLGCKNIPHTKSSKYSFHHRKCPTPGCDGSGHVTGRFTAHYCLSGCPLAEKNQGKLKADLSDTEASTRKRNLIGFPQRKKSRHHGSFRGRPPKYRKIQQEDFQTISSDNMHQSLFMSALSAHPDRSLSLCWEQHCKLLPGVAGITATTVAKWTIDEVFSFVQTLTGCEDQAKLFKDEMIDGEAFLLLTQADIVKIMSVKLGPALKIYNAILMFKNADDTLK.

Basic and acidic residues-rich tracts occupy residues 65-82 and 144-155; these read FPREPPRNTGAERPEKGV and AVKEGHAKKDGD. 3 disordered regions span residues 65–87, 142–163, and 237–296; these read FPREPPRNTGAERPEKGVGSEPI, AEAVKEGHAKKDGDSDVAPTSR, and VKKR…SEEK. 3 MBT repeats span residues 300–400, 408–507, and 516–611; these read WSWA…LQPP, FSWT…LTPP, and FIWE…LQPP. Residues 473–480 form an interaction with monomethylated and dimethylated peptides region; it reads FDNWDDTY. A CCHHC-type zinc finger spans residues 639–682; it reads SKYSFHHRKCPTPGCDGSGHVTGRFTAHYCLSGCPLAEKNQGKL. Residues cysteine 648, cysteine 653, histidine 666, and cysteine 672 each coordinate Zn(2+). The region spanning 778-842 is the SAM domain; the sequence is WTIDEVFSFV…YNAILMFKNA (65 aa).

As to quaternary structure, homodimer.

It is found in the nucleus. In terms of biological role, polycomb group (PcG) protein that specifically recognizes and binds mono- and dimethyllysine residues on target proteins, thereby acting as a 'reader' of a network of post-translational modifications. PcG proteins maintain the transcriptionally repressive state of genes: acts as a chromatin compaction factor by recognizing and binding mono- and dimethylated histone H1b/H1-4 at 'Lys-26' (H1bK26me1 and H1bK26me2) and histone H4 at 'Lys-20' (H4K20me1 and H4K20me2), leading to condense chromatin and repress transcription. The polypeptide is Lethal(3)malignant brain tumor-like protein 1 (L3MBTL1) (Gallus gallus (Chicken)).